Reading from the N-terminus, the 493-residue chain is Putative glycerol-3-phosphate transporter 5 (493 aa).

The next 12 helical transmembrane spans lie at 25-44, 83-103, 113-133, 145-165, 185-205, 207-227, 292-312, 328-348, 352-372, 375-395, 428-448, and 452-472; these read FTFH…ASFH, LGEL…FAGH, FLVF…LGYW, VQIV…SVVG, SVGN…GWGW, FVLP…FLVV, FCLF…PYYL, GILS…AGFI, IKAR…ALIM, VYGS…GLLV, AIID…AGYI, and GWNS…LFLV.

This sequence belongs to the major facilitator superfamily. Organophosphate:Pi antiporter (OPA) (TC 2.A.1.4) family.

The protein resides in the membrane. This Arabidopsis thaliana (Mouse-ear cress) protein is Putative glycerol-3-phosphate transporter 5.